The primary structure comprises 137 residues: Universal stress protein in QAH/OAS sulfhydrylase 3'region (137 aa).

It belongs to the universal stress protein A family.

This Thermus aquaticus protein is Universal stress protein in QAH/OAS sulfhydrylase 3'region.